Reading from the N-terminus, the 237-residue chain is Phosphoribosylaminoimidazole-succinocarboxamide synthase (237 aa).

It belongs to the SAICAR synthetase family.

The enzyme catalyses 5-amino-1-(5-phospho-D-ribosyl)imidazole-4-carboxylate + L-aspartate + ATP = (2S)-2-[5-amino-1-(5-phospho-beta-D-ribosyl)imidazole-4-carboxamido]succinate + ADP + phosphate + 2 H(+). It functions in the pathway purine metabolism; IMP biosynthesis via de novo pathway; 5-amino-1-(5-phospho-D-ribosyl)imidazole-4-carboxamide from 5-amino-1-(5-phospho-D-ribosyl)imidazole-4-carboxylate: step 1/2. This Psychrobacter cryohalolentis (strain ATCC BAA-1226 / DSM 17306 / VKM B-2378 / K5) protein is Phosphoribosylaminoimidazole-succinocarboxamide synthase.